The primary structure comprises 497 residues: Histidine--tRNA ligase (497 aa).

This sequence belongs to the class-II aminoacyl-tRNA synthetase family. As to quaternary structure, homodimer.

It localises to the cytoplasm. It carries out the reaction tRNA(His) + L-histidine + ATP = L-histidyl-tRNA(His) + AMP + diphosphate + H(+). This chain is Histidine--tRNA ligase, found in Dinoroseobacter shibae (strain DSM 16493 / NCIMB 14021 / DFL 12).